The following is an 81-amino-acid chain: Adipogenin (81 aa).

A helical membrane pass occupies residues 16-36 (FLASWLCLPVGLLLFLLIVWL).

The protein belongs to the adipogenin family.

Its subcellular location is the membrane. The protein localises to the nucleus. In terms of biological role, plays a role in stimulating adipocyte differentiation and development. This chain is Adipogenin, found in Sus scrofa (Pig).